A 299-amino-acid chain; its full sequence is ATP phosphoribosyltransferase (299 aa).

The protein belongs to the ATP phosphoribosyltransferase family. Long subfamily. In terms of assembly, equilibrium between an active dimeric form, an inactive hexameric form and higher aggregates. Interconversion between the various forms is largely reversible and is influenced by the natural substrates and inhibitors of the enzyme. Requires Mg(2+) as cofactor.

The protein resides in the cytoplasm. The enzyme catalyses 1-(5-phospho-beta-D-ribosyl)-ATP + diphosphate = 5-phospho-alpha-D-ribose 1-diphosphate + ATP. It participates in amino-acid biosynthesis; L-histidine biosynthesis; L-histidine from 5-phospho-alpha-D-ribose 1-diphosphate: step 1/9. Feedback inhibited by histidine. Its function is as follows. Catalyzes the condensation of ATP and 5-phosphoribose 1-diphosphate to form N'-(5'-phosphoribosyl)-ATP (PR-ATP). Has a crucial role in the pathway because the rate of histidine biosynthesis seems to be controlled primarily by regulation of HisG enzymatic activity. This Buchnera aphidicola subsp. Schlechtendalia chinensis protein is ATP phosphoribosyltransferase.